Here is a 298-residue protein sequence, read N- to C-terminus: Porphobilinogen deaminase (298 aa).

S-(dipyrrolylmethanemethyl)cysteine is present on cysteine 239.

The protein belongs to the HMBS family. Monomer. Dipyrromethane serves as cofactor.

The catalysed reaction is 4 porphobilinogen + H2O = hydroxymethylbilane + 4 NH4(+). The protein operates within porphyrin-containing compound metabolism; protoporphyrin-IX biosynthesis; coproporphyrinogen-III from 5-aminolevulinate: step 2/4. In terms of biological role, tetrapolymerization of the monopyrrole PBG into the hydroxymethylbilane pre-uroporphyrinogen in several discrete steps. The sequence is that of Porphobilinogen deaminase from Orientia tsutsugamushi (strain Boryong) (Rickettsia tsutsugamushi).